The sequence spans 349 residues: UDP-3-O-acylglucosamine N-acyltransferase (349 aa).

Residue His243 is the Proton acceptor of the active site.

This sequence belongs to the transferase hexapeptide repeat family. LpxD subfamily. As to quaternary structure, homotrimer.

It carries out the reaction a UDP-3-O-[(3R)-3-hydroxyacyl]-alpha-D-glucosamine + a (3R)-hydroxyacyl-[ACP] = a UDP-2-N,3-O-bis[(3R)-3-hydroxyacyl]-alpha-D-glucosamine + holo-[ACP] + H(+). Its pathway is bacterial outer membrane biogenesis; LPS lipid A biosynthesis. Catalyzes the N-acylation of UDP-3-O-acylglucosamine using 3-hydroxyacyl-ACP as the acyl donor. Is involved in the biosynthesis of lipid A, a phosphorylated glycolipid that anchors the lipopolysaccharide to the outer membrane of the cell. This chain is UDP-3-O-acylglucosamine N-acyltransferase, found in Myxococcus xanthus (strain DK1622).